A 411-amino-acid polypeptide reads, in one-letter code: LL-diaminopimelate aminotransferase (411 aa).

Substrate contacts are provided by Tyr-15 and Gly-42. Residues Tyr-72, 108 to 109, Tyr-132, Asn-187, Tyr-218, and 246 to 248 contribute to the pyridoxal 5'-phosphate site; these read AK and SFS. The substrate site is built by Lys-109, Tyr-132, and Asn-187. Lys-249 carries the N6-(pyridoxal phosphate)lysine modification. Residues Arg-257 and Asn-292 each contribute to the pyridoxal 5'-phosphate site. Asn-292 and Arg-388 together coordinate substrate.

Belongs to the class-I pyridoxal-phosphate-dependent aminotransferase family. LL-diaminopimelate aminotransferase subfamily. Homodimer. Requires pyridoxal 5'-phosphate as cofactor.

It catalyses the reaction (2S,6S)-2,6-diaminopimelate + 2-oxoglutarate = (S)-2,3,4,5-tetrahydrodipicolinate + L-glutamate + H2O + H(+). Its pathway is amino-acid biosynthesis; L-lysine biosynthesis via DAP pathway; LL-2,6-diaminopimelate from (S)-tetrahydrodipicolinate (aminotransferase route): step 1/1. In terms of biological role, involved in the synthesis of meso-diaminopimelate (m-DAP or DL-DAP), required for both lysine and peptidoglycan biosynthesis. Catalyzes the direct conversion of tetrahydrodipicolinate to LL-diaminopimelate. The protein is LL-diaminopimelate aminotransferase of Crocosphaera subtropica (strain ATCC 51142 / BH68) (Cyanothece sp. (strain ATCC 51142)).